The sequence spans 330 residues: MIQTIENRLINGGEPTFEEALLLASSADKEALYETAHRITRHFMGDKFDTCSIINAKSGNCPEDCKWCAQSRHYATSIEKYGLLSATVCAEQAAYNRRQGIGRFSLVASGRTASMNEIRQMAESFRTIKQRTDIKCCASLGLLSEEKLQILFDNGVTTYHCNMETAPSFFPSLCSTHTQEEKLATIRAARRVGMRVCSGGIIGMGETMEQRIEFAFFLHSINVYSIPINILQPIPGTPLEKTPPLSEEEYLTTVALFRLINPRAFLRFSGGRAQLSPAVQRKAIYIGINAAITGDLLTTTGSKAAEDMQLARECGFQVTNDTDWEVSYDH.

The Radical SAM core domain occupies 43-272 (FMGDKFDTCS…RAFLRFSGGR (230 aa)). 3 residues coordinate [4Fe-4S] cluster: Cys-61, Cys-65, and Cys-68. 4 residues coordinate [2Fe-2S] cluster: Ser-105, Cys-137, Cys-197, and Arg-267.

This sequence belongs to the radical SAM superfamily. Biotin synthase family. Homodimer. [4Fe-4S] cluster serves as cofactor. Requires [2Fe-2S] cluster as cofactor.

The catalysed reaction is (4R,5S)-dethiobiotin + (sulfur carrier)-SH + 2 reduced [2Fe-2S]-[ferredoxin] + 2 S-adenosyl-L-methionine = (sulfur carrier)-H + biotin + 2 5'-deoxyadenosine + 2 L-methionine + 2 oxidized [2Fe-2S]-[ferredoxin]. The protein operates within cofactor biosynthesis; biotin biosynthesis; biotin from 7,8-diaminononanoate: step 2/2. Catalyzes the conversion of dethiobiotin (DTB) to biotin by the insertion of a sulfur atom into dethiobiotin via a radical-based mechanism. This Porphyromonas gingivalis (strain ATCC 33277 / DSM 20709 / CIP 103683 / JCM 12257 / NCTC 11834 / 2561) protein is Biotin synthase.